Here is a 276-residue protein sequence, read N- to C-terminus: Ribosomal RNA small subunit methyltransferase I (276 aa).

This sequence belongs to the methyltransferase superfamily. RsmI family.

It is found in the cytoplasm. It catalyses the reaction cytidine(1402) in 16S rRNA + S-adenosyl-L-methionine = 2'-O-methylcytidine(1402) in 16S rRNA + S-adenosyl-L-homocysteine + H(+). Functionally, catalyzes the 2'-O-methylation of the ribose of cytidine 1402 (C1402) in 16S rRNA. The chain is Ribosomal RNA small subunit methyltransferase I from Mycoplasma pneumoniae (strain ATCC 29342 / M129 / Subtype 1) (Mycoplasmoides pneumoniae).